The primary structure comprises 1441 residues: Remodeling and spacing factor 1 (1441 aa).

The DDT domain maps to 17–84 (PGSCPNFAVV…MRKIGKSVTA (68 aa)). Glycyl lysine isopeptide (Lys-Gly) (interchain with G-Cter in SUMO2) cross-links involve residues K136 and K215. Polar residues predominate over residues 215–227 (KNSSQQDNSSRES). The segment at 215–283 (KNSSQQDNSS…TTVKKEKEDE (69 aa)) is disordered. Residue S227 is modified to Phosphoserine. Composition is skewed to basic and acidic residues over residues 234 to 257 (ETKK…KSEE) and 274 to 283 (TTVKKEKEDE). Glycyl lysine isopeptide (Lys-Gly) (interchain with G-Cter in SUMO2) cross-links involve residues K236, K243, K248, K252, and K254. Residue K277 forms a Glycyl lysine isopeptide (Lys-Gly) (interchain with G-Cter in SUMO1); alternate linkage. K277 participates in a covalent cross-link: Glycyl lysine isopeptide (Lys-Gly) (interchain with G-Cter in SUMO2); alternate. Glycyl lysine isopeptide (Lys-Gly) (interchain with G-Cter in SUMO2) cross-links involve residues K284, K288, K294, K305, K306, K309, K323, K327, K337, K342, K358, K373, K381, and K390. Positions 330–340 (RADPKDTKSSM) are enriched in basic and acidic residues. The tract at residues 330 to 385 (RADPKDTKSSMEKPVAQEPERIEFGGNIKSSHEITEKSTEETEKLKNDQQAKIPLK) is disordered. A compositionally biased stretch (basic and acidic residues) spans 359 to 378 (SSHEITEKSTEETEKLKNDQ). S392 and S397 each carry phosphoserine. Glycyl lysine isopeptide (Lys-Gly) (interchain with G-Cter in SUMO2) cross-links involve residues K400, K405, K415, and K419. At S429 the chain carries Phosphoserine. A Glycyl lysine isopeptide (Lys-Gly) (interchain with G-Cter in SUMO2) cross-link involves residue K439. A Glycyl lysine isopeptide (Lys-Gly) (interchain with G-Cter in SUMO1); alternate cross-link involves residue K456. Residue K456 forms a Glycyl lysine isopeptide (Lys-Gly) (interchain with G-Cter in SUMO2); alternate linkage. Residues K463 and K468 each participate in a glycyl lysine isopeptide (Lys-Gly) (interchain with G-Cter in SUMO2) cross-link. Residues 467 to 480 (TKEESYSPSKDRNI) show a composition bias toward basic and acidic residues. A disordered region spans residues 467 to 634 (TKEESYSPSK…AAETSPPSNI (168 aa)). A Phosphoserine modification is found at S473. Over residues 482–498 (TEGNGTESLNSVITSMK) the composition is skewed to polar residues. K498 is covalently cross-linked (Glycyl lysine isopeptide (Lys-Gly) (interchain with G-Cter in SUMO2)). A compositionally biased stretch (basic and acidic residues) spans 500-514 (GELEKETAPLRKDAD). S524 carries the phosphoserine modification. The span at 552–562 (SKTALSSTESC) shows a compositional bias: polar residues. A Glycyl lysine isopeptide (Lys-Gly) (interchain with G-Cter in SUMO2) cross-link involves residue K565. Over residues 565-601 (KGEEKSPKTKKDKRPPILECLEKLEKSKKTFLDKDAQ) the composition is skewed to basic and acidic residues. 2 positions are modified to phosphoserine: S570 and S604. A compositionally biased stretch (basic and acidic residues) spans 609–621 (EVPKSTLESEKPG). S622 bears the Phosphoserine mark. Position 628 is a phosphothreonine (T628). Phosphoserine is present on S629. Glycyl lysine isopeptide (Lys-Gly) (interchain with G-Cter in SUMO2) cross-links involve residues K662, K663, K670, K677, K698, and K709. The segment at 675-887 (FTKVEMDNLD…EEKESEEAIL (213 aa)) is disordered. S748 is modified (phosphoserine). Basic and acidic residues-rich tracts occupy residues 753–770 (LEPE…EKTN), 789–802 (AEIR…KRGE), and 816–831 (KTDK…KDTN). Residues K758, K768, K795, and K799 each participate in a glycyl lysine isopeptide (Lys-Gly) (interchain with G-Cter in SUMO2) cross-link. The span at 864–873 (GSGSEKSSAA) shows a compositional bias: low complexity. The span at 874–887 (SEEEEEKESEEAIL) shows a compositional bias: acidic residues. S882 is modified (phosphoserine). Residues 891–941 (DEPCKKCGLPNHPELILLCDSCDSGYHTACLRPPLMIIPDGEWFCPPCQHK) form a PHD-type zinc finger. The stretch at 942-1012 (LLCEKLEEQL…SKANLLERRS (71 aa)) forms a coiled coil. A disordered region spans residues 983 to 1007 (PPQEPDFSEDQEEKKKDSKKSKANL). A Glycyl lysine isopeptide (Lys-Gly) (interchain with G-Cter in SUMO2) cross-link involves residue K1039. K1050 is modified (N6-acetyllysine). The interval 1063-1428 (ISTILDEERK…EEEEDELLRV (366 aa)) is disordered. Acidic residues-rich tracts occupy residues 1094-1107 (LDSD…ESED) and 1120-1141 (VVSD…DSDT). A phosphoserine mark is found at S1096, S1098, and S1105. Residues 1146 to 1169 (RRLRRHPSRPMRQSRRLRRKTPKK) show a composition bias toward basic residues. The span at 1189-1199 (SDFSDDFSDDF) shows a compositional bias: acidic residues. Basic residues predominate over residues 1203–1212 (RRRRSRRNQK). Residues S1221, S1223, and S1226 each carry the phosphoserine modification. Over residues 1229-1244 (SLRRGKEIRRVHKRRL) the composition is skewed to basic residues. S1258 and S1277 each carry phosphoserine. Phosphothreonine is present on T1278. Over residues 1280-1292 (EYSEADEEEEEEE) the composition is skewed to acidic residues. A Phosphothreonine modification is found at T1305. Residues S1325 and S1336 each carry the phosphoserine modification. The segment covering 1335-1344 (ESTKKPYRIE) has biased composition (basic and acidic residues). Position 1339 is an N6-acetyllysine (K1339). 3 positions are modified to phosphoserine: S1345, S1359, and S1375. Residues 1394 to 1408 (PKDNSTASASLASNG) are compositionally biased toward polar residues.

Component of the RSF-1 ISWI chromatin-remodeling complex at least composed of SMARCA1 and RSF1. Within the RSF-1 ISWI chromatin-remodeling complex interacts with SMARCA1. Component of the RSF-5 ISWI chromatin-remodeling complex (also called the RSF complex) at least composed of SMARCA5/SNF2H and RSF1. Within the RSF-5 ISWI chromatin-remodeling complex interacts with SMARCA5/SNF2H; the interaction is direct. Identified in a centromere complex containing histones H2A, H2B and H4, and at least CENPA, CENPB, CENPC, CENPT, CENPN, HJURP, SUPT16H, SSRP1 and RSF1. Also binds the HBV pX/HBx protein, which is required to activate transcription of the viral genome. Phosphorylated. As to expression, ubiquitously expressed. Highly expressed in the heart, skeletal muscle, kidney and placenta. Expressed at low levels in the brain and colon.

The protein localises to the nucleus. In terms of biological role, regulatory subunit of the ATP-dependent RSF-1 and RSF-5 ISWI chromatin-remodeling complexes, which form ordered nucleosome arrays on chromatin and facilitate access to DNA during DNA-templated processes such as DNA replication, transcription, and repair. Binds to core histones together with SMARCA5, and is required for the assembly of regular nucleosome arrays by the RSF-5 ISWI chromatin-remodeling complex. Directly stimulates the ATPase activity of SMARCA1 and SMARCA5 in the RSF-1 and RSF-5 ISWI chromatin-remodeling complexes, respectively. The RSF-1 ISWI chromatin remodeling complex has a lower ATP hydrolysis rate than the RSF-5 ISWI chromatin-remodeling complex. The complexes do not have the ability to slide mononucleosomes to the center of a DNA template. Facilitates transcription of hepatitis B virus (HBV) genes by the pX transcription activator. In case of infection by HBV, together with pX, it represses TNF-alpha induced NF-kappa-B transcription activation. Represses transcription when artificially recruited to chromatin by fusion to a heterogeneous DNA binding domain. This chain is Remodeling and spacing factor 1 (RSF1), found in Homo sapiens (Human).